Here is a 156-residue protein sequence, read N- to C-terminus: Putative HTH-type transcriptional regulator YwgB (156 aa).

One can recognise an HTH rrf2-type domain in the interval 2-133 (KMKSGMEQAV…REESLQHVMD (132 aa)).

The protein is Putative HTH-type transcriptional regulator YwgB (ywgB) of Bacillus subtilis (strain 168).